The sequence spans 1393 residues: DNA-directed RNA polymerase subunit beta' (1393 aa).

Residues C70, C72, C85, and C88 each coordinate Zn(2+). Residues D461, D463, and D465 each contribute to the Mg(2+) site. Zn(2+)-binding residues include C804, C877, C884, and C887.

The protein belongs to the RNA polymerase beta' chain family. As to quaternary structure, the RNAP catalytic core consists of 2 alpha, 1 beta, 1 beta' and 1 omega subunit. When a sigma factor is associated with the core the holoenzyme is formed, which can initiate transcription. Mg(2+) serves as cofactor. The cofactor is Zn(2+).

It catalyses the reaction RNA(n) + a ribonucleoside 5'-triphosphate = RNA(n+1) + diphosphate. DNA-dependent RNA polymerase catalyzes the transcription of DNA into RNA using the four ribonucleoside triphosphates as substrates. The sequence is that of DNA-directed RNA polymerase subunit beta' from Rhodospirillum rubrum (strain ATCC 11170 / ATH 1.1.1 / DSM 467 / LMG 4362 / NCIMB 8255 / S1).